We begin with the raw amino-acid sequence, 329 residues long: L-lactate dehydrogenase (329 aa).

NAD(+) is bound by residues valine 18, glutamate 39, lysine 46, tyrosine 71, and 85–86 (GA). Substrate is bound by residues glutamine 88 and arginine 94. Residues serine 107, 124 to 126 (AAN), and serine 149 contribute to the NAD(+) site. Position 126-129 (126-129 (NPVD)) interacts with substrate. 154 to 157 (DSAR) is a binding site for substrate. Residues arginine 159 and histidine 174 each coordinate beta-D-fructose 1,6-bisphosphate. Histidine 181 acts as the Proton acceptor in catalysis. Tyrosine 226 is subject to Phosphotyrosine. A substrate-binding site is contributed by threonine 235.

This sequence belongs to the LDH/MDH superfamily. LDH family. As to quaternary structure, homotetramer.

The protein resides in the cytoplasm. It carries out the reaction (S)-lactate + NAD(+) = pyruvate + NADH + H(+). It participates in fermentation; pyruvate fermentation to lactate; (S)-lactate from pyruvate: step 1/1. Allosterically activated by fructose 1,6-bisphosphate (FBP). Catalyzes the conversion of lactate to pyruvate. This chain is L-lactate dehydrogenase, found in Streptococcus agalactiae serotype V (strain ATCC BAA-611 / 2603 V/R).